The sequence spans 319 residues: HTH-type transcriptional regulator YidZ (319 aa).

The region spanning 8-65 is the HTH lysR-type domain; that stretch reads LDLNLLLCLQLLMQERSVTKAAKRMNVTPSAVSKSLAKLRAWFDDPLFVNSPLGLSPT. The segment at residues 25–44 is a DNA-binding region (H-T-H motif); that stretch reads VTKAAKRMNVTPSAVSKSLA.

Belongs to the LysR transcriptional regulatory family.

Its function is as follows. Involved in anaerobic NO protection. This chain is HTH-type transcriptional regulator YidZ, found in Escherichia coli O6:H1 (strain CFT073 / ATCC 700928 / UPEC).